A 645-amino-acid polypeptide reads, in one-letter code: 1-deoxy-D-xylulose-5-phosphate synthase (645 aa).

Residues histidine 79 and 120–122 (AHS) each bind thiamine diphosphate. Aspartate 155 provides a ligand contact to Mg(2+). Thiamine diphosphate contacts are provided by residues 156–157 (GA), asparagine 184, tyrosine 293, and glutamate 375. Asparagine 184 serves as a coordination point for Mg(2+).

This sequence belongs to the transketolase family. DXPS subfamily. As to quaternary structure, homodimer. Requires Mg(2+) as cofactor. Thiamine diphosphate is required as a cofactor.

It carries out the reaction D-glyceraldehyde 3-phosphate + pyruvate + H(+) = 1-deoxy-D-xylulose 5-phosphate + CO2. It participates in metabolic intermediate biosynthesis; 1-deoxy-D-xylulose 5-phosphate biosynthesis; 1-deoxy-D-xylulose 5-phosphate from D-glyceraldehyde 3-phosphate and pyruvate: step 1/1. Catalyzes the acyloin condensation reaction between C atoms 2 and 3 of pyruvate and glyceraldehyde 3-phosphate to yield 1-deoxy-D-xylulose-5-phosphate (DXP). The polypeptide is 1-deoxy-D-xylulose-5-phosphate synthase (Ruegeria sp. (strain TM1040) (Silicibacter sp.)).